The primary structure comprises 35 residues: Dermonecrotic toxin LrSicTox-alphaI-1 (35 aa).

His11 is a catalytic residue. Asp33 provides a ligand contact to Mg(2+).

This sequence belongs to the arthropod phospholipase D family. Class II subfamily. Requires Mg(2+) as cofactor. Contains 2 disulfide bonds. Expressed by the venom gland.

It localises to the secreted. The catalysed reaction is an N-(acyl)-sphingosylphosphocholine = an N-(acyl)-sphingosyl-1,3-cyclic phosphate + choline. It catalyses the reaction an N-(acyl)-sphingosylphosphoethanolamine = an N-(acyl)-sphingosyl-1,3-cyclic phosphate + ethanolamine. The enzyme catalyses a 1-acyl-sn-glycero-3-phosphocholine = a 1-acyl-sn-glycero-2,3-cyclic phosphate + choline. It carries out the reaction a 1-acyl-sn-glycero-3-phosphoethanolamine = a 1-acyl-sn-glycero-2,3-cyclic phosphate + ethanolamine. Its function is as follows. Dermonecrotic toxins cleave the phosphodiester linkage between the phosphate and headgroup of certain phospholipids (sphingolipid and lysolipid substrates), forming an alcohol (often choline) and a cyclic phosphate. This toxin acts on sphingomyelin (SM). It may also act on ceramide phosphoethanolamine (CPE), lysophosphatidylcholine (LPC) and lysophosphatidylethanolamine (LPE), but not on lysophosphatidylserine (LPS), and lysophosphatidylglycerol (LPG). It acts by transphosphatidylation, releasing exclusively cyclic phosphate products as second products. Induces dermonecrosis, hemolysis, increased vascular permeability, edema, inflammatory response, and platelet aggregation. This is Dermonecrotic toxin LrSicTox-alphaI-1 from Loxosceles reclusa (Brown recluse spider).